The sequence spans 72 residues: Translation initiation factor IF-1 (72 aa).

The region spanning 1 to 72 (MSKEDMIEFS…SKGRITFRFK (72 aa)) is the S1-like domain.

Belongs to the IF-1 family. In terms of assembly, component of the 30S ribosomal translation pre-initiation complex which assembles on the 30S ribosome in the order IF-2 and IF-3, IF-1 and N-formylmethionyl-tRNA(fMet); mRNA recruitment can occur at any time during PIC assembly.

Its subcellular location is the cytoplasm. Its function is as follows. One of the essential components for the initiation of protein synthesis. Stabilizes the binding of IF-2 and IF-3 on the 30S subunit to which N-formylmethionyl-tRNA(fMet) subsequently binds. Helps modulate mRNA selection, yielding the 30S pre-initiation complex (PIC). Upon addition of the 50S ribosomal subunit IF-1, IF-2 and IF-3 are released leaving the mature 70S translation initiation complex. This chain is Translation initiation factor IF-1, found in Gluconacetobacter diazotrophicus (strain ATCC 49037 / DSM 5601 / CCUG 37298 / CIP 103539 / LMG 7603 / PAl5).